The following is a 504-amino-acid chain: Probable GTP-binding protein OBGC2 (504 aa).

Positions 24-39 (AHRDARPALRLPELHA) are enriched in basic and acidic residues. Disordered regions lie at residues 24-46 (AHRD…RRNN) and 93-122 (VLAM…GVKK). In terms of domain architecture, Obg spans 73–276 (HKYFDHAVVT…VSLELILRVV (204 aa)). Positions 107–122 (SPRRRSDKGKRSGVKK) are enriched in basic residues. An OBG-type G domain is found at 277–494 (ADVGLVGLPN…MLKEIRAALR (218 aa)). Residues 283–290 (GLPNAGKS) and 337–341 (DLPGL) each bind GTP. The segment covering 436–452 (SEDSLNGNTGEHNTSSE) has biased composition (polar residues). Positions 436-463 (SEDSLNGNTGEHNTSSETKVEGGEKELR) are disordered. Residues 453–463 (TKVEGGEKELR) show a composition bias toward basic and acidic residues.

The protein belongs to the TRAFAC class OBG-HflX-like GTPase superfamily. OBG GTPase family.

In terms of biological role, may bind GTP and have GTPase activity. The protein is Probable GTP-binding protein OBGC2 of Oryza sativa subsp. japonica (Rice).